The following is a 110-amino-acid chain: UPF0367 protein Syncc9605_2376 (110 aa).

Belongs to the UPF0367 family.

The sequence is that of UPF0367 protein Syncc9605_2376 from Synechococcus sp. (strain CC9605).